The following is a 376-amino-acid chain: Succinyl-diaminopimelate desuccinylase (376 aa).

Residue His-67 coordinates Zn(2+). Asp-69 is an active-site residue. Asp-100 contacts Zn(2+). The Proton acceptor role is filled by Glu-134. Zn(2+)-binding residues include Glu-135, Glu-163, and His-349.

The protein belongs to the peptidase M20A family. DapE subfamily. Homodimer. Zn(2+) serves as cofactor. Co(2+) is required as a cofactor.

It carries out the reaction N-succinyl-(2S,6S)-2,6-diaminopimelate + H2O = (2S,6S)-2,6-diaminopimelate + succinate. It functions in the pathway amino-acid biosynthesis; L-lysine biosynthesis via DAP pathway; LL-2,6-diaminopimelate from (S)-tetrahydrodipicolinate (succinylase route): step 3/3. In terms of biological role, catalyzes the hydrolysis of N-succinyl-L,L-diaminopimelic acid (SDAP), forming succinate and LL-2,6-diaminopimelate (DAP), an intermediate involved in the bacterial biosynthesis of lysine and meso-diaminopimelic acid, an essential component of bacterial cell walls. The protein is Succinyl-diaminopimelate desuccinylase of Proteus mirabilis (strain HI4320).